The chain runs to 388 residues: Succinate--CoA ligase [ADP-forming] subunit beta (388 aa).

Residues 9–244 (KQLFAEYGLP…PSQDDPREAH (236 aa)) form the ATP-grasp domain. Residues Lys-46, 53 to 55 (GRG), Glu-99, Thr-102, and Glu-107 contribute to the ATP site. Mg(2+) contacts are provided by Asn-199 and Asp-213. Substrate-binding positions include Asn-264 and 321–323 (GIV).

The protein belongs to the succinate/malate CoA ligase beta subunit family. As to quaternary structure, heterotetramer of two alpha and two beta subunits. Mg(2+) is required as a cofactor.

It catalyses the reaction succinate + ATP + CoA = succinyl-CoA + ADP + phosphate. It carries out the reaction GTP + succinate + CoA = succinyl-CoA + GDP + phosphate. It functions in the pathway carbohydrate metabolism; tricarboxylic acid cycle; succinate from succinyl-CoA (ligase route): step 1/1. Functionally, succinyl-CoA synthetase functions in the citric acid cycle (TCA), coupling the hydrolysis of succinyl-CoA to the synthesis of either ATP or GTP and thus represents the only step of substrate-level phosphorylation in the TCA. The beta subunit provides nucleotide specificity of the enzyme and binds the substrate succinate, while the binding sites for coenzyme A and phosphate are found in the alpha subunit. In Pseudomonas fluorescens (strain ATCC BAA-477 / NRRL B-23932 / Pf-5), this protein is Succinate--CoA ligase [ADP-forming] subunit beta.